The sequence spans 146 residues: Large ribosomal subunit protein uL15 (146 aa).

A compositionally biased stretch (basic and acidic residues) spans 1 to 10; it reads MTLKLHDLRP. Residues 1 to 41 are disordered; sequence MTLKLHDLRPARGSKTARTRVGRGDGSKGKTAGRGTKGTRA.

The protein belongs to the universal ribosomal protein uL15 family. Part of the 50S ribosomal subunit.

Functionally, binds to the 23S rRNA. The chain is Large ribosomal subunit protein uL15 from Mycobacterium bovis (strain BCG / Pasteur 1173P2).